Consider the following 339-residue polypeptide: Dihydroorotate dehydrogenase (quinone) (339 aa).

FMN-binding positions include 62–66 and threonine 86; that span reads AGMDK. Lysine 66 lines the substrate pocket. Residue 111 to 115 coordinates substrate; it reads NRMGF. Residues asparagine 139 and asparagine 172 each contribute to the FMN site. Substrate is bound at residue asparagine 172. Residue serine 175 is the Nucleophile of the active site. Residue asparagine 177 participates in substrate binding. FMN contacts are provided by lysine 217 and threonine 245. Position 246 to 247 (246 to 247) interacts with substrate; that stretch reads NT. Residues glycine 268, glycine 297, and 318-319 each bind FMN; that span reads YS.

The protein belongs to the dihydroorotate dehydrogenase family. Type 2 subfamily. In terms of assembly, monomer. The cofactor is FMN.

The protein resides in the cell membrane. The catalysed reaction is (S)-dihydroorotate + a quinone = orotate + a quinol. It participates in pyrimidine metabolism; UMP biosynthesis via de novo pathway; orotate from (S)-dihydroorotate (quinone route): step 1/1. Functionally, catalyzes the conversion of dihydroorotate to orotate with quinone as electron acceptor. The polypeptide is Dihydroorotate dehydrogenase (quinone) (Shewanella baltica (strain OS155 / ATCC BAA-1091)).